The primary structure comprises 221 residues: Large ribosomal subunit protein uL4 (221 aa).

The tract at residues 45–100 (ARQGTHKTKNRGEVSGAGRKPFKQKGTGRARQGSIRAPQMTGGGIVHGPTPRDYSQ) is disordered.

It belongs to the universal ribosomal protein uL4 family. In terms of assembly, part of the 50S ribosomal subunit.

In terms of biological role, one of the primary rRNA binding proteins, this protein initially binds near the 5'-end of the 23S rRNA. It is important during the early stages of 50S assembly. It makes multiple contacts with different domains of the 23S rRNA in the assembled 50S subunit and ribosome. Its function is as follows. Forms part of the polypeptide exit tunnel. This chain is Large ribosomal subunit protein uL4, found in Leifsonia xyli subsp. xyli (strain CTCB07).